Consider the following 465-residue polypeptide: RuvB-like helicase 2 (465 aa).

72 to 79 lines the ATP pocket; the sequence is GPPSTGKT.

The protein belongs to the RuvB family. As to quaternary structure, may form heterododecamers with RVB1. Component of the SWR1 chromatin remodeling complex, the INO80 chromatin remodeling complex, and of the R2TP complex. Interacts with dil1.

It is found in the nucleus. It carries out the reaction ATP + H2O = ADP + phosphate + H(+). Functionally, DNA helicase which participates in several chromatin remodeling complexes, including the SWR1 and the INO80 complexes. The SWR1 complex mediates the ATP-dependent exchange of histone H2A for the H2A variant HZT1 leading to transcriptional regulation of selected genes by chromatin remodeling. The INO80 complex remodels chromatin by shifting nucleosomes and is involved in DNA repair. Also involved in pre-rRNA processing. The protein is RuvB-like helicase 2 (rvb2) of Schizosaccharomyces pombe (strain 972 / ATCC 24843) (Fission yeast).